A 376-amino-acid chain; its full sequence is Succinyl-diaminopimelate desuccinylase (376 aa).

His64 contacts Zn(2+). Residue Asp66 is part of the active site. Asp97 is a Zn(2+) binding site. Glu131 (proton acceptor) is an active-site residue. Residues Glu132, Glu160, and His347 each coordinate Zn(2+).

This sequence belongs to the peptidase M20A family. DapE subfamily. As to quaternary structure, homodimer. It depends on Zn(2+) as a cofactor. The cofactor is Co(2+).

It carries out the reaction N-succinyl-(2S,6S)-2,6-diaminopimelate + H2O = (2S,6S)-2,6-diaminopimelate + succinate. It participates in amino-acid biosynthesis; L-lysine biosynthesis via DAP pathway; LL-2,6-diaminopimelate from (S)-tetrahydrodipicolinate (succinylase route): step 3/3. Catalyzes the hydrolysis of N-succinyl-L,L-diaminopimelic acid (SDAP), forming succinate and LL-2,6-diaminopimelate (DAP), an intermediate involved in the bacterial biosynthesis of lysine and meso-diaminopimelic acid, an essential component of bacterial cell walls. The chain is Succinyl-diaminopimelate desuccinylase from Wigglesworthia glossinidia brevipalpis.